The chain runs to 205 residues: Holliday junction branch migration complex subunit RuvA (205 aa).

The interval 1–64 (MIAHLRGELV…EDALTLYGFL (64 aa)) is domain I. A domain II region spans residues 65 to 143 (TQAEYDLFEL…AVPAGGGGVP (79 aa)). Residues 144 to 153 (DGLPVAVAPA) are flexible linker. Residues 153 to 205 (AGDAWAEASEALIALGYSRGEAAAALARVRAEAGEAPSVETLVRLALKQLYRG) form a domain III region.

It belongs to the RuvA family. As to quaternary structure, homotetramer. Forms an RuvA(8)-RuvB(12)-Holliday junction (HJ) complex. HJ DNA is sandwiched between 2 RuvA tetramers; dsDNA enters through RuvA and exits via RuvB. An RuvB hexamer assembles on each DNA strand where it exits the tetramer. Each RuvB hexamer is contacted by two RuvA subunits (via domain III) on 2 adjacent RuvB subunits; this complex drives branch migration. In the full resolvosome a probable DNA-RuvA(4)-RuvB(12)-RuvC(2) complex forms which resolves the HJ.

Its subcellular location is the cytoplasm. The RuvA-RuvB-RuvC complex processes Holliday junction (HJ) DNA during genetic recombination and DNA repair, while the RuvA-RuvB complex plays an important role in the rescue of blocked DNA replication forks via replication fork reversal (RFR). RuvA specifically binds to HJ cruciform DNA, conferring on it an open structure. The RuvB hexamer acts as an ATP-dependent pump, pulling dsDNA into and through the RuvAB complex. HJ branch migration allows RuvC to scan DNA until it finds its consensus sequence, where it cleaves and resolves the cruciform DNA. This is Holliday junction branch migration complex subunit RuvA from Symbiobacterium thermophilum (strain DSM 24528 / JCM 14929 / IAM 14863 / T).